The primary structure comprises 244 residues: UPF0246 protein SGO_1307 (244 aa).

This sequence belongs to the UPF0246 family.

This chain is UPF0246 protein SGO_1307, found in Streptococcus gordonii (strain Challis / ATCC 35105 / BCRC 15272 / CH1 / DL1 / V288).